Reading from the N-terminus, the 258-residue chain is Small ribosomal subunit protein uS2 (258 aa).

This sequence belongs to the universal ribosomal protein uS2 family.

The protein is Small ribosomal subunit protein uS2 of Streptococcus suis (strain 98HAH33).